Reading from the N-terminus, the 63-residue chain is Eumenitin VP1 (63 aa).

An N-terminal signal peptide occupies residues 1–22 (MRGTSFILFAVVVILGFLHANA). AXPX repeat units lie at residues 22–25 (AEPL), 26–29 (ANPA), 32–35 (ANPD), 40–43 (ADPL), and 44–47 (ADPE). The propeptide occupies 23 to 48 (EPLANPAPLANPDPLANADPLADPEA).

In terms of tissue distribution, expressed by the venom gland.

The protein localises to the secreted. It is found in the target cell membrane. In terms of biological role, antimicrobial peptide with activities against the fungi B.cinerea (MIC=5 uM) and C.albicans (MIC=100 uM), the Gram-negative bacterium E.coli (MIC=25 uM) and the Gram-positive bacterium S.aureus (MIC=100 uM). Shows cytolytic activity against insect cell lines. Has no hemolytic activity against human erythrocytes. In vivo, peptide injection in the vicinity of the head and thorax of lepidopteran larvae induces feeding disorder followed by death due to starvation. The polypeptide is Eumenitin VP1 (Eumenes pomiformis (Potter wasp)).